We begin with the raw amino-acid sequence, 123 residues long: Small ribosomal subunit protein bS16 (123 aa).

A disordered region spans residues Ala79–Glu123.

Belongs to the bacterial ribosomal protein bS16 family.

The protein is Small ribosomal subunit protein bS16 of Brucella melitensis biotype 2 (strain ATCC 23457).